The primary structure comprises 167 residues: Small ribosomal subunit protein uS5 (167 aa).

The S5 DRBM domain maps to 12–75 (LNEKLIAVNR…EKARRNIRDV (64 aa)).

Belongs to the universal ribosomal protein uS5 family. As to quaternary structure, part of the 30S ribosomal subunit. Contacts proteins S4 and S8.

Its function is as follows. With S4 and S12 plays an important role in translational accuracy. Located at the back of the 30S subunit body where it stabilizes the conformation of the head with respect to the body. This Psychromonas ingrahamii (strain DSM 17664 / CCUG 51855 / 37) protein is Small ribosomal subunit protein uS5.